Consider the following 984-residue polypeptide: uncharacterized protein (984 aa).

The tract at residues 941-984 is disordered; sequence FGPSGPGPNQGPGDDYNNFKSTKYPRNGYNKYQPNNRIHSRNRY.

The protein resides in the virion. This is an uncharacterized protein from Acanthamoeba polyphaga (Amoeba).